We begin with the raw amino-acid sequence, 458 residues long: MFDVIVKNCRLVSSDGITEADILVKDGKVAAISADTSDVEASRTIDAGGKFVMPGVVDEHVHIIDMDLKNRYGRFELDSESAAVGGITTIIEMPITFPPTTTLDAFLEKKKQAGQRLKVDFALYGGGVPGNLPEIRKMHDAGAVGFKSMMAASVPGMFDAVSDGELFEIFQEIAACGSVIVVHAENETIIQALQKQIKAAGGKDMAAYEASQPVFQENEAIQRALLLQKEAGCRLIVLHVSNPDGVELIHQAQSEGQDVHCESGPQYLNITTDDAERIGPYMKVAPPVRSAEMNIRLWEQLENGLIDTLGSDHGGHPVEDKEPGWKDVWKAGNGALGLETSLPMMLTNGVNKGRLSLERLVEVMCEKPAKLFGIYPQKGTLQVGSDADLLILDLDIDTKVDASQFRSLHKYSPFDGMPVTGAPVLTMVRGTVVAEKGEVLVEQGFGQFVTRRNYEASK.

6 residues coordinate Zn(2+): His60, His62, Lys147, His183, His239, and Asp312. An N6-carboxylysine modification is found at Lys147.

Homotetramer. Requires Zn(2+) as cofactor. In terms of processing, carboxylation allows a single lysine to coordinate two zinc ions.

Its function is as follows. Rather more predominant for the cleavage of aryl- than for alkyl-hydantoin derivatives. The stereoselectivity of this enzyme depends on the substrate used for bioconversion: strictly L-selective for the cleavage of D,L-5-indolylmethylhydantoin, but D-selective for the hydrolysis of D,L-methylthioethylhydantoin. The sequence is that of L-hydantoinase (lhyD) from Paenarthrobacter aurescens (Arthrobacter aurescens).